The chain runs to 358 residues: Fructose-bisphosphate aldolase (358 aa).

S61 provides a ligand contact to D-glyceraldehyde 3-phosphate. Residue D108 is the Proton donor of the active site. Residues H109, D143, E173, and H225 each contribute to the Zn(2+) site. G226 provides a ligand contact to dihydroxyacetone phosphate. H264 lines the Zn(2+) pocket. Residues 265–267 (GGS) and 286–289 (NIDT) each bind dihydroxyacetone phosphate. Residues T289, T312, T340, and T342 each carry the phosphothreonine modification.

This sequence belongs to the class II fructose-bisphosphate aldolase family. In terms of assembly, homodimer. Zn(2+) serves as cofactor.

It carries out the reaction beta-D-fructose 1,6-bisphosphate = D-glyceraldehyde 3-phosphate + dihydroxyacetone phosphate. It functions in the pathway carbohydrate degradation; glycolysis; D-glyceraldehyde 3-phosphate and glycerone phosphate from D-glucose: step 4/4. Functionally, catalyzes the aldol condensation of dihydroxyacetone phosphate (DHAP or glycerone-phosphate) with glyceraldehyde 3-phosphate (G3P) to form fructose 1,6-bisphosphate (FBP) in gluconeogenesis and the reverse reaction in glycolysis. The protein is Fructose-bisphosphate aldolase (fba1) of Schizosaccharomyces pombe (strain 972 / ATCC 24843) (Fission yeast).